Consider the following 125-residue polypeptide: MARVKRGVTSHAKHKKVLKAAKGYYGRRKNTIRIAKQAVEKGLQYAYRDRKNRKRNFRSLWIQRLNAAAREHGLTYSRLIDGLAKAGIVVDRKALSELAIHEPAAFAAVVEQARAALPAETAQAA.

The protein belongs to the bacterial ribosomal protein bL20 family.

Its function is as follows. Binds directly to 23S ribosomal RNA and is necessary for the in vitro assembly process of the 50S ribosomal subunit. It is not involved in the protein synthesizing functions of that subunit. The chain is Large ribosomal subunit protein bL20 from Methylobacterium sp. (strain 4-46).